The chain runs to 348 residues: S-adenosyl-L-methionine-dependent methyl transferase PigF (348 aa).

Glu-199 contributes to the S-adenosyl-L-methionine binding site. His-247 functions as the Proton acceptor in the catalytic mechanism.

It belongs to the class I-like SAM-binding methyltransferase superfamily. Cation-independent O-methyltransferase family.

Its pathway is antibiotic biosynthesis; prodigiosin biosynthesis. In terms of biological role, involved in the biosynthesis of 4-methoxy-2,2'-bipyrrole-5-carbaldehyde (MBC), one of the terminal products involved in the biosynthesis of the red antibiotic prodigiosin (Pig). Catalyzes the transfer of a methyl group from S-adenosyl-L-methionine (SAM) to the hydroxyl group of 4-hydroxy-2,2'-bipyrrole-5-carbaldehyde (HBC) to yield 4-methoxy-2,2'-bipyrrole-5-carbaldehyde (MBC). This is S-adenosyl-L-methionine-dependent methyl transferase PigF from Serratia sp. (strain ATCC 39006) (Prodigiosinella confusarubida).